Consider the following 852-residue polypeptide: Phenylalanine--tRNA ligase beta subunit (852 aa).

The region spanning 44-159 (PETTGPLVIG…DADLASANLK (116 aa)) is the tRNA-binding domain. Residues 428–510 (PEMPMITIHT…RLEGLEDIPS (83 aa)) enclose the B5 domain. Positions 488, 494, 497, and 498 each coordinate Mg(2+). The region spanning 758–851 (SAFPAVLQDI…ATEKVGAQLR (94 aa)) is the FDX-ACB domain.

This sequence belongs to the phenylalanyl-tRNA synthetase beta subunit family. Type 1 subfamily. In terms of assembly, tetramer of two alpha and two beta subunits. The cofactor is Mg(2+).

Its subcellular location is the cytoplasm. The enzyme catalyses tRNA(Phe) + L-phenylalanine + ATP = L-phenylalanyl-tRNA(Phe) + AMP + diphosphate + H(+). The sequence is that of Phenylalanine--tRNA ligase beta subunit from Corynebacterium jeikeium (strain K411).